Consider the following 31-residue polypeptide: Phallacidin proprotein 1 (31 aa).

A propeptide spanning residues 1-10 (MSDINATRLP) is cleaved from the precursor. Residues 11 to 17 (AWLVDCP) constitute a cross-link (cyclopeptide (Ala-Pro)). The segment at residues 12-16 (WLVDC) is a cross-link (2'-cysteinyl-6'-hydroxytryptophan sulfoxide (Trp-Cys)). Residues 18 to 31 (CVGDDVNRLLTRGE) constitute a propeptide that is removed on maturation.

This sequence belongs to the MSDIN fungal toxin family. Post-translationally, processed by the macrocyclase-peptidase enzyme POPB to yield a toxic cyclic heptapeptide. POPB first removes 10 residues from the N-terminus. Conformational trapping of the remaining peptide forces the enzyme to release this intermediate rather than proceed to macrocyclization. The enzyme rebinds the remaining peptide in a different conformation and catalyzes macrocyclization of the N-terminal 7 residues.

Major toxin that belongs to the bicyclic heptapeptides called phallotoxins. Although structurally related to amatoxins, phallotoxins have a different mode of action, which is the stabilization of F-actin. Phallotoxins are poisonous when administered parenterally, but not orally because of poor absorption. This Amanita bisporigera (Destroying angel) protein is Phallacidin proprotein 1 (PHA1_2).